A 79-amino-acid chain; its full sequence is Sulfur carrier protein TusA (79 aa).

The active-site Cysteine persulfide intermediate is the Cys-17.

This sequence belongs to the sulfur carrier protein TusA family.

Its subcellular location is the cytoplasm. Sulfur carrier protein which probably makes part of a sulfur-relay system. In Actinobacillus pleuropneumoniae serotype 7 (strain AP76), this protein is Sulfur carrier protein TusA.